We begin with the raw amino-acid sequence, 128 residues long: Ribosome-binding factor A (128 aa).

This sequence belongs to the RbfA family. Monomer. Binds 30S ribosomal subunits, but not 50S ribosomal subunits or 70S ribosomes.

It is found in the cytoplasm. Its function is as follows. One of several proteins that assist in the late maturation steps of the functional core of the 30S ribosomal subunit. Associates with free 30S ribosomal subunits (but not with 30S subunits that are part of 70S ribosomes or polysomes). Required for efficient processing of 16S rRNA. May interact with the 5'-terminal helix region of 16S rRNA. The chain is Ribosome-binding factor A from Rickettsia prowazekii (strain Madrid E).